The primary structure comprises 889 residues: Translation initiation factor IF-2 (889 aa).

The tract at residues 158 to 296 (LKEKQEKRRQ…KYKSDELQSQ (139 aa)) is disordered. Over residues 209–228 (AAATPATSTAPATTSTTAAT) the composition is skewed to low complexity. A compositionally biased stretch (basic and acidic residues) spans 238-270 (VKPEEKGEKKKKPTKQDAWKDEPVKRREPKARG). One can recognise a tr-type G domain in the interval 391–560 (PRAPVVTVMG…LLQAEVLELK (170 aa)). Residues 400 to 407 (GHVDHGKT) form a G1 region. 400 to 407 (GHVDHGKT) lines the GTP pocket. Residues 425 to 429 (GITQH) form a G2 region. The G3 stretch occupies residues 446–449 (DTPG). Residues 446–450 (DTPGH) and 500–503 (NKMD) contribute to the GTP site. The tract at residues 500–503 (NKMD) is G4. Residues 536 to 538 (SAK) form a G5 region.

The protein belongs to the TRAFAC class translation factor GTPase superfamily. Classic translation factor GTPase family. IF-2 subfamily.

It is found in the cytoplasm. One of the essential components for the initiation of protein synthesis. Protects formylmethionyl-tRNA from spontaneous hydrolysis and promotes its binding to the 30S ribosomal subunits. Also involved in the hydrolysis of GTP during the formation of the 70S ribosomal complex. The protein is Translation initiation factor IF-2 of Nitrosomonas europaea (strain ATCC 19718 / CIP 103999 / KCTC 2705 / NBRC 14298).